Reading from the N-terminus, the 362-residue chain is Heme A synthase (362 aa).

Helical transmembrane passes span 12 to 32 (AVKIWLGAIAALIAAMVLVGG), 102 to 122 (VIGLAYLLPFLWFIWRGHLGG), 128 to 148 (LWLIFGLGALQGAVGWWMVAS), 159 to 179 (ERLAIHLTLALVIFAAIVWTL), and 198 to 218 (AAALLALTFVQIFFGALVAGL). Residue His262 coordinates heme. Transmembrane regions (helical) follow at residues 264-286 (MLAYALWALAIAHAIDAVRARAG), 291-311 (GAVWFAAALTLQAALGIFTLL), and 314-334 (VPIGLALAHQAVAVLVLMLGV). Residue His322 coordinates heme.

This sequence belongs to the COX15/CtaA family. Type 2 subfamily. As to quaternary structure, interacts with CtaB. Requires heme b as cofactor.

The protein resides in the cell membrane. The catalysed reaction is Fe(II)-heme o + 2 A + H2O = Fe(II)-heme a + 2 AH2. Its pathway is porphyrin-containing compound metabolism; heme A biosynthesis; heme A from heme O: step 1/1. In terms of biological role, catalyzes the conversion of heme O to heme A by two successive hydroxylations of the methyl group at C8. The first hydroxylation forms heme I, the second hydroxylation results in an unstable dihydroxymethyl group, which spontaneously dehydrates, resulting in the formyl group of heme A. The polypeptide is Heme A synthase (Rhodopseudomonas palustris (strain BisA53)).